Here is a 599-residue protein sequence, read N- to C-terminus: NADH-ubiquinone oxidoreductase chain 5 (599 aa).

A run of 17 helical transmembrane segments spans residues 1–21, 41–61, 79–99, 114–134, 137–157, 166–186, 198–218, 237–257, 269–289, 297–317, 323–343, 362–382, 400–420, 453–473, 478–498, 509–529, and 578–598; these read MALM…PLVF, FITS…IIIL, LDLY…SIME, FLNY…ANNM, LFIG…WWYG, LQAI…MAWF, IFSL…AAMG, TPVS…FLLI, IMTT…ICAL, IIAF…GINQ, LHIC…GSII, MPLT…TPFM, INSW…AYST, LMLG…PVNM, MPFT…IVAM, MYPN…PTII, and GMLK…MLIM.

This sequence belongs to the complex I subunit 5 family.

The protein localises to the mitochondrion inner membrane. The catalysed reaction is a ubiquinone + NADH + 5 H(+)(in) = a ubiquinol + NAD(+) + 4 H(+)(out). Functionally, core subunit of the mitochondrial membrane respiratory chain NADH dehydrogenase (Complex I) that is believed to belong to the minimal assembly required for catalysis. Complex I functions in the transfer of electrons from NADH to the respiratory chain. The immediate electron acceptor for the enzyme is believed to be ubiquinone. This chain is NADH-ubiquinone oxidoreductase chain 5 (ND5), found in Geomys personatus (Texas pocket gopher).